Reading from the N-terminus, the 500-residue chain is Cytochrome P450 71B35 (500 aa).

A helical membrane pass occupies residues 1-21 (MAHIWLLPLIFLVCILLAVFN). Residue cysteine 439 participates in heme binding.

It belongs to the cytochrome P450 family. It depends on heme as a cofactor.

It is found in the membrane. The sequence is that of Cytochrome P450 71B35 (CYP71B35) from Arabidopsis thaliana (Mouse-ear cress).